The chain runs to 730 residues: Hemolytic phospholipase C (730 aa).

Positions 1 to 38 (MTENWKFRRRTFLKHGAQAATLAGLSGLFPETLRRALA) form a signal peptide, tat-type signal.

This sequence belongs to the bacterial phospholipase C family. Predicted to be exported by the Tat system. The position of the signal peptide cleavage has not been experimentally proven.

It catalyses the reaction a 1,2-diacyl-sn-glycero-3-phosphocholine + H2O = phosphocholine + a 1,2-diacyl-sn-glycerol + H(+). Its function is as follows. Hydrolyzes sphingomyelin in addition to phosphatidylcholine. The protein is Hemolytic phospholipase C (plcH) of Pseudomonas aeruginosa (strain ATCC 15692 / DSM 22644 / CIP 104116 / JCM 14847 / LMG 12228 / 1C / PRS 101 / PAO1).